Consider the following 114-residue polypeptide: Putative cysteine proteinase inhibitor 9 (114 aa).

The signal sequence occupies residues 1 to 23 (MRTSSLVLFAAVAVFGAACTAAA).

This sequence belongs to the cystatin family. Phytocystatin subfamily.

The protein localises to the secreted. Functionally, specific inhibitor of cysteine proteinases. Probably involved in the regulation of endogenous processes and in defense against pests and pathogens. The protein is Putative cysteine proteinase inhibitor 9 of Oryza sativa subsp. japonica (Rice).